The sequence spans 156 residues: Arginine repressor (156 aa).

This sequence belongs to the ArgR family.

Its subcellular location is the cytoplasm. It participates in amino-acid biosynthesis; L-arginine biosynthesis [regulation]. Functionally, regulates arginine biosynthesis genes. The chain is Arginine repressor from Shewanella loihica (strain ATCC BAA-1088 / PV-4).